Consider the following 63-residue polypeptide: Adipokinetic prohormone type 1 (63 aa).

Residues 1 to 22 (MVQRCLVVALLVVVVAAALCSA) form the signal peptide. Q23 is subject to Pyrrolidone carboxylic acid. The residue at position 32 (T32) is a Threonine amide.

Belongs to the AKH/HRTH/RPCH family. As to quaternary structure, adipokinetic hormone precursor-related peptide (APRP) can form three type of disulfide-bond dimers: p1 (alpha-alpha), p2 (alpha-beta), and p3 (beta-beta).

Its subcellular location is the secreted. This hormone, released from cells in the corpora cardiaca, causes release of diglycerides from the fat body and stimulation of muscles to use these diglycerides as an energy source during energy-demanding processes. In Schistocerca gregaria (Desert locust), this protein is Adipokinetic prohormone type 1.